Consider the following 316-residue polypeptide: 4-hydroxy-3-methylbut-2-enyl diphosphate reductase (316 aa).

Residue cysteine 12 participates in [4Fe-4S] cluster binding. Positions 41 and 74 each coordinate (2E)-4-hydroxy-3-methylbut-2-enyl diphosphate. 2 residues coordinate dimethylallyl diphosphate: histidine 41 and histidine 74. Isopentenyl diphosphate-binding residues include histidine 41 and histidine 74. Cysteine 96 provides a ligand contact to [4Fe-4S] cluster. Residue histidine 124 participates in (2E)-4-hydroxy-3-methylbut-2-enyl diphosphate binding. Histidine 124 contacts dimethylallyl diphosphate. Histidine 124 serves as a coordination point for isopentenyl diphosphate. Glutamate 126 (proton donor) is an active-site residue. Threonine 169 is a binding site for (2E)-4-hydroxy-3-methylbut-2-enyl diphosphate. Cysteine 199 contacts [4Fe-4S] cluster. 4 residues coordinate (2E)-4-hydroxy-3-methylbut-2-enyl diphosphate: serine 227, serine 228, asparagine 229, and serine 271. The dimethylallyl diphosphate site is built by serine 227, serine 228, asparagine 229, and serine 271. Serine 227, serine 228, asparagine 229, and serine 271 together coordinate isopentenyl diphosphate.

The protein belongs to the IspH family. [4Fe-4S] cluster serves as cofactor.

The catalysed reaction is isopentenyl diphosphate + 2 oxidized [2Fe-2S]-[ferredoxin] + H2O = (2E)-4-hydroxy-3-methylbut-2-enyl diphosphate + 2 reduced [2Fe-2S]-[ferredoxin] + 2 H(+). It carries out the reaction dimethylallyl diphosphate + 2 oxidized [2Fe-2S]-[ferredoxin] + H2O = (2E)-4-hydroxy-3-methylbut-2-enyl diphosphate + 2 reduced [2Fe-2S]-[ferredoxin] + 2 H(+). The protein operates within isoprenoid biosynthesis; dimethylallyl diphosphate biosynthesis; dimethylallyl diphosphate from (2E)-4-hydroxy-3-methylbutenyl diphosphate: step 1/1. Its pathway is isoprenoid biosynthesis; isopentenyl diphosphate biosynthesis via DXP pathway; isopentenyl diphosphate from 1-deoxy-D-xylulose 5-phosphate: step 6/6. Functionally, catalyzes the conversion of 1-hydroxy-2-methyl-2-(E)-butenyl 4-diphosphate (HMBPP) into a mixture of isopentenyl diphosphate (IPP) and dimethylallyl diphosphate (DMAPP). Acts in the terminal step of the DOXP/MEP pathway for isoprenoid precursor biosynthesis. In Xylella fastidiosa (strain M12), this protein is 4-hydroxy-3-methylbut-2-enyl diphosphate reductase.